The primary structure comprises 345 residues: Ferredoxin--NADP reductase (345 aa).

FAD-binding residues include Asp-38, Gln-46, Tyr-51, Val-91, Phe-129, Asp-295, and Thr-336.

Belongs to the ferredoxin--NADP reductase type 2 family. Homodimer. FAD is required as a cofactor.

It catalyses the reaction 2 reduced [2Fe-2S]-[ferredoxin] + NADP(+) + H(+) = 2 oxidized [2Fe-2S]-[ferredoxin] + NADPH. In Rhodospirillum rubrum (strain ATCC 11170 / ATH 1.1.1 / DSM 467 / LMG 4362 / NCIMB 8255 / S1), this protein is Ferredoxin--NADP reductase.